Here is a 251-residue protein sequence, read N- to C-terminus: Protein FAM216A (251 aa).

Residues 1-41 are disordered; sequence MPSRWPGVAGPPALARTEGGEGSAGHSYPQNSKGTGEQHKA.

Belongs to the FAM216 family.

The chain is Protein FAM216A (Fam216a) from Mus musculus (Mouse).